The chain runs to 115 residues: NADH-ubiquinone oxidoreductase chain 3 (115 aa).

3 helical membrane passes run L5 to P25, F55 to L75, and L86 to W106.

It belongs to the complex I subunit 3 family. In terms of assembly, core subunit of respiratory chain NADH dehydrogenase (Complex I) which is composed of 45 different subunits. Interacts with TMEM186. Interacts with TMEM242.

The protein resides in the mitochondrion inner membrane. It catalyses the reaction a ubiquinone + NADH + 5 H(+)(in) = a ubiquinol + NAD(+) + 4 H(+)(out). Its function is as follows. Core subunit of the mitochondrial membrane respiratory chain NADH dehydrogenase (Complex I) which catalyzes electron transfer from NADH through the respiratory chain, using ubiquinone as an electron acceptor. Essential for the catalytic activity of complex I. The protein is NADH-ubiquinone oxidoreductase chain 3 of Avahi cleesei (Cleese's woolly lemur).